A 121-amino-acid polypeptide reads, in one-letter code: uncharacterized protein (121 aa).

Positions 8–37 (KQLMVCRDEIKKLKLKEKEAKNRILTYLKN) form a coiled coil.

This is an uncharacterized protein from Aedes vexans (Inland floodwater mosquito).